The chain runs to 715 residues: Fatty acid oxidation complex subunit alpha (715 aa).

The interval M1–A190 is enoyl-CoA hydratase/isomerase. Position 297 (D297) interacts with substrate. The segment at K312–G715 is 3-hydroxyacyl-CoA dehydrogenase. NAD(+) contacts are provided by residues M325, D344, V401–E403, K408, and S430. H451 (for 3-hydroxyacyl-CoA dehydrogenase activity) is an active-site residue. Residue N454 participates in NAD(+) binding. Residues N501 and Y660 each coordinate substrate.

The protein in the N-terminal section; belongs to the enoyl-CoA hydratase/isomerase family. It in the C-terminal section; belongs to the 3-hydroxyacyl-CoA dehydrogenase family. In terms of assembly, heterotetramer of two alpha chains (FadB) and two beta chains (FadA).

It catalyses the reaction a (3S)-3-hydroxyacyl-CoA + NAD(+) = a 3-oxoacyl-CoA + NADH + H(+). The enzyme catalyses a (3S)-3-hydroxyacyl-CoA = a (2E)-enoyl-CoA + H2O. The catalysed reaction is a 4-saturated-(3S)-3-hydroxyacyl-CoA = a (3E)-enoyl-CoA + H2O. It carries out the reaction (3S)-3-hydroxybutanoyl-CoA = (3R)-3-hydroxybutanoyl-CoA. It catalyses the reaction a (3Z)-enoyl-CoA = a 4-saturated (2E)-enoyl-CoA. The enzyme catalyses a (3E)-enoyl-CoA = a 4-saturated (2E)-enoyl-CoA. The protein operates within lipid metabolism; fatty acid beta-oxidation. In terms of biological role, involved in the aerobic and anaerobic degradation of long-chain fatty acids via beta-oxidation cycle. Catalyzes the formation of 3-oxoacyl-CoA from enoyl-CoA via L-3-hydroxyacyl-CoA. It can also use D-3-hydroxyacyl-CoA and cis-3-enoyl-CoA as substrate. In Pseudomonas fluorescens (strain Pf0-1), this protein is Fatty acid oxidation complex subunit alpha.